The following is a 398-amino-acid chain: Cytohesin-1 (398 aa).

Residue Met1 is modified to N-acetylmethionine. The necessary for localization at adherens junction stretch occupies residues 1-60 (MEDDDSYVPSDLTAEERQELENIRRRKQELLADIQRLKEEIAEVANEIESLGSTEERKNM). A coiled-coil region spans residues 10-67 (SDLTAEERQELENIRRRKQELLADIQRLKEEIAEVANEIESLGSTEERKNMQRNKQVA). In terms of domain architecture, SEC7 spans 73-202 (FNMDPKKGIQ…IIMLNTSLHN (130 aa)). The region spanning 260-377 (NPDREGWLLK…WIKCIKAAIS (118 aa)) is the PH domain. A 1,2-diacyl-sn-glycero-3-phospho-(1D-myo-inositol-3,4,5-trisphosphate)-binding positions include 269-277 (KLGGGRVKT), Arg281, Tyr292, Arg302, and Asn351. The C-terminal autoinhibitory region stretch occupies residues 388–396 (RKKKVSSTK).

Interacts with TRIM23 and CYTIP. Interacts (via coiled-coil domain) with FRMD4A (via coiled-coil domain). Interacts with FRMD4B. Found in a complex with PARD3, CYTH1 and FRMD4A. Interacts (via N-terminal domain) with INAVA (via N-terminal domain). In terms of processing, ubiquitinated by SCF(FBXW11) E3 ubiquitin-protein ligase complex. Ubiquitination induces proteasomal degradation. In terms of tissue distribution, expressed in colon and small intestine (at protein level).

It is found in the cell membrane. The protein resides in the cytoplasm. Its subcellular location is the cytosol. The protein localises to the cell junction. It localises to the tight junction. It is found in the adherens junction. Its function is as follows. Promotes guanine-nucleotide exchange on ARF1, ARF5 and ARF6. Promotes the activation of ARF factors through replacement of GDP with GTP. Plays an important role in membrane trafficking, during junctional remodeling and epithelial polarization, through regulation of ARF6 activity. This is Cytohesin-1 (Cyth1) from Mus musculus (Mouse).